The sequence spans 612 residues: Glutamine--fructose-6-phosphate aminotransferase [isomerizing] (612 aa).

Catalysis depends on cysteine 2, which acts as the Nucleophile; for GATase activity. Residues 2 to 220 (CGIVGAIRAH…DGDIALLASD (219 aa)) form the Glutamine amidotransferase type-2 domain. SIS domains lie at 288-428 (AKSV…VRGL) and 461-602 (WAQQ…VDKP). Lysine 607 acts as the For Fru-6P isomerization activity in catalysis.

Homodimer.

The protein resides in the cytoplasm. The catalysed reaction is D-fructose 6-phosphate + L-glutamine = D-glucosamine 6-phosphate + L-glutamate. Functionally, catalyzes the first step in hexosamine metabolism, converting fructose-6P into glucosamine-6P using glutamine as a nitrogen source. This Neisseria meningitidis serogroup B (strain ATCC BAA-335 / MC58) protein is Glutamine--fructose-6-phosphate aminotransferase [isomerizing].